A 544-amino-acid polypeptide reads, in one-letter code: Pyruvate kinase (544 aa).

Arg31 contributes to the substrate binding site. K(+) is bound by residues Asn33 and Asp61. Position 33–36 (33–36 (NSAH)) interacts with ATP. Arg68 serves as a coordination point for ATP. Glu204 lines the Mg(2+) pocket. Substrate-binding residues include Gly227, Asp228, and Thr260. Asp228 contacts Mg(2+).

The protein belongs to the pyruvate kinase family. Homotetramer. Mg(2+) is required as a cofactor. K(+) serves as cofactor.

It carries out the reaction pyruvate + ATP = phosphoenolpyruvate + ADP + H(+). It functions in the pathway carbohydrate degradation; glycolysis; pyruvate from D-glyceraldehyde 3-phosphate: step 5/5. The protein is Pyruvate kinase of Thermoplasma acidophilum (strain ATCC 25905 / DSM 1728 / JCM 9062 / NBRC 15155 / AMRC-C165).